We begin with the raw amino-acid sequence, 368 residues long: Alanine racemase (368 aa).

The Proton acceptor; specific for D-alanine role is filled by lysine 40. Lysine 40 is subject to N6-(pyridoxal phosphate)lysine. Arginine 134 is a substrate binding site. The Proton acceptor; specific for L-alanine role is filled by tyrosine 263. Methionine 310 serves as a coordination point for substrate.

Belongs to the alanine racemase family. Requires pyridoxal 5'-phosphate as cofactor.

The enzyme catalyses L-alanine = D-alanine. It functions in the pathway amino-acid biosynthesis; D-alanine biosynthesis; D-alanine from L-alanine: step 1/1. In terms of biological role, catalyzes the interconversion of L-alanine and D-alanine. May also act on other amino acids. This chain is Alanine racemase (alr), found in Listeria monocytogenes serovar 1/2a (strain ATCC BAA-679 / EGD-e).